A 1381-amino-acid chain; its full sequence is DNA-directed RNA polymerase subunit beta'' (1381 aa).

Zn(2+) contacts are provided by Cys224, Cys296, Cys303, and Cys306.

Belongs to the RNA polymerase beta' chain family. RpoC2 subfamily. As to quaternary structure, in plastids the minimal PEP RNA polymerase catalytic core is composed of four subunits: alpha, beta, beta', and beta''. When a (nuclear-encoded) sigma factor is associated with the core the holoenzyme is formed, which can initiate transcription. It depends on Zn(2+) as a cofactor.

The protein resides in the plastid. It is found in the chloroplast. The enzyme catalyses RNA(n) + a ribonucleoside 5'-triphosphate = RNA(n+1) + diphosphate. DNA-dependent RNA polymerase catalyzes the transcription of DNA into RNA using the four ribonucleoside triphosphates as substrates. In Drimys granadensis, this protein is DNA-directed RNA polymerase subunit beta''.